The primary structure comprises 460 residues: Lysosomal proton-coupled steroid conjugate and bile acid symporter SLC46A3 (460 aa).

The first 25 residues, 1–25, serve as a signal peptide directing secretion; that stretch reads MKISFIEPAILLNAFAMTLTIPLTA. Residues 26-73 lie on the Extracellular side of the membrane; sequence QYVYRRIWEETGNYTFASNSNGSECDQNKSSSIFAFREEVQKKASLFN. Asn38, Asn46, and Asn53 each carry an N-linked (GlcNAc...) asparagine glycan. A helical transmembrane segment spans residues 74 to 94; that stretch reads LQVEMSALIPGLVSTFMLLAS. Residues 95-111 lie on the Cytoplasmic side of the membrane; the sequence is SDNHGRKLPMVLSSLGS. The helical transmembrane segment at 112 to 132 threads the bilayer; sequence LGTNTWLCMMSYFDLPLQLLI. Residues 133-135 are Extracellular-facing; that stretch reads AST. A helical membrane pass occupies residues 136-156; the sequence is FIGALFGNYTTFWGACFAYIV. At 157-170 the chain is on the cytoplasmic side; the sequence is DQQKEYKHRIIRIA. Residues 171-191 traverse the membrane as a helical segment; sequence ILDFMLGVVTGLTGLSSGYFI. Residues 192-195 are Extracellular-facing; sequence RELG. Residues 196–216 form a helical membrane-spanning segment; sequence FVWSYFITAMVLIVNLAYILF. Topologically, residues 217–257 are cytoplasmic; that stretch reads FLNDPIKESSSQIVTMSCIESLKDLFYRTYMLFKNGSSKRQ. The helical transmembrane segment at 258-278 threads the bilayer; the sequence is ALLCLLIFTLVIYFFVIIGIS. Residues 279–301 lie on the Extracellular side of the membrane; sequence PIFTLYELGPPLCWNEVYIGYGS. The chain crosses the membrane as a helical span at residues 302–322; the sequence is ALGSVSFLSSFLGIWLFSYCL. The Cytoplasmic portion of the chain corresponds to 323-324; it reads KD. The helical transmembrane segment at 325-345 threads the bilayer; that stretch reads IHIAYIGIFTTMVGMTLAAFT. The Extracellular portion of the chain corresponds to 346-347; sequence RT. The helical transmembrane segment at 348 to 368 threads the bilayer; that stretch reads TLMMFLVRIPFIFTIMPLSVL. Over 369–381 the chain is Cytoplasmic; it reads RSMLSKVVHSTEQ. A helical membrane pass occupies residues 382 to 402; sequence GALFACIAFLETLAGVTSTSA. Residues 403–410 are Extracellular-facing; sequence YSGIYSAT. The chain crosses the membrane as a helical span at residues 411–431; the sequence is VAWYPGFIFLLSAGLLVLPAI. Over 432–460 the chain is Cytoplasmic; sequence SLCCVKSIGWEEGSYTLLVHEEPSEHTSD. The Tyrosine-based lysosomal-sorting motif signature appears at 446-449; the sequence is YTLL.

Belongs to the major facilitator superfamily. SLC46A family. As to expression, expressed in liver, kidney, small intestine and colon.

Its subcellular location is the lysosome membrane. It carries out the reaction estrone 3-sulfate(out) + n H(+)(out) = estrone 3-sulfate(in) + n H(+)(in). The catalysed reaction is 25-hydroxyvitamin D3 sulfate(out) + n H(+)(out) = 25-hydroxyvitamin D3 sulfate(in) + n H(+)(in). The enzyme catalyses cholate(out) + n H(+)(out) = cholate(in) + n H(+)(in). It catalyses the reaction glycocholate(out) + n H(+)(out) = glycocholate(in) + n H(+)(in). It carries out the reaction taurocholate(out) + n H(+)(out) = taurocholate(in) + n H(+)(in). The catalysed reaction is dehydroepiandrosterone 3-sulfate(out) + n H(+)(out) = dehydroepiandrosterone 3-sulfate(in) + n H(+)(in). The enzyme catalyses N-acetyl-D-muramoyl-L-alanyl-D-isoglutamine(out) + n H(+)(out) = N-acetyl-D-muramoyl-L-alanyl-D-isoglutamine(in) + n H(+)(in). It catalyses the reaction 2',3'-cGAMP(out) + n H(+)(out) = 2',3'-cGAMP(in) + n H(+)(in). Functionally, lysosomal proton-coupled steroid conjugate and bile acid transporter. Preferentially recognizes lipophilic steroid conjugates or bile acis as endogenous substrates and seems to mediate escape from lysosomes to the cytoplasm. Modulates hepatic cytosolic copper homeostasis, maybe acting as a lysosomal copper transporter and sequestering copper ions in the lysosome. Delivers pathogen-associated molecular patterns to cytosolic pattern recognition receptors as part of the innate immune response to microbes. Selectively transports bacterial muramyl dipeptide (MDP) into the cytosol for recognition by NOD2, triggering inflammatory responses. Likely acts as a redundant importer of cyclic GMP-AMP dinucleotides (cGAMPs) in monocyte and macrophage cell lineages. The transport mechanism, its electrogenicity and stoichiometry remain to be elucidated. This Mus musculus (Mouse) protein is Lysosomal proton-coupled steroid conjugate and bile acid symporter SLC46A3 (Slc46a3).